The primary structure comprises 563 residues: Rhodopsin kinase GRK1 (563 aa).

The interval 1–15 is interaction with RCVRN; the sequence is MDFGSLETVVANSAF. The tract at residues 1–189 is N-terminal; it reads MDFGSLETVV…LEAQPMGEDW (189 aa). Phosphoserine is present on Ser5. Thr8 carries the post-translational modification Phosphothreonine. Ser21 is modified (phosphoserine; by PKA and autocatalysis). Residues 58–175 form the RGS domain; the sequence is FESVCLEQPI…LGSLYFLRFL (118 aa). A Protein kinase domain is found at 190–455; it reads FLDFRVLGKG…CDKLRAHPLF (266 aa). ATP-binding positions include 196-204 and Lys219; that span reads LGKGGFGEV. The active-site Proton acceptor is Asp317. The region spanning 456-521 is the AGC-kinase C-terminal domain; it reads KDLNWRQLEA…GNCPIPWQEE (66 aa). The interval 456–563 is C-terminal; it reads KDLNWRQLEA…SSKSGMCLVS (108 aa). The residue at position 491 (Ser491) is a Phosphoserine; by autocatalysis. Thr492 is modified (phosphothreonine; by autocatalysis). Positions 539 to 563 are disordered; it reads QMPDDMKGISGGSSSSSKSGMCLVS. The span at 550–563 shows a compositional bias: low complexity; sequence GSSSSSKSGMCLVS. Cysteine methyl ester is present on Cys560. Cys560 is lipidated: S-farnesyl cysteine. Positions 561 to 563 are cleaved as a propeptide — removed in mature form; sequence LVS.

It belongs to the protein kinase superfamily. AGC Ser/Thr protein kinase family. GPRK subfamily. Interacts (via N-terminus) with RCVRN (via C-terminus); the interaction is Ca(2+)-dependent. Interacts (when prenylated) with PDE6D; this promotes release from membranes. May form a complex composed of RHO, GRK1 and RCVRN in a Ca(2+)-dependent manner; RCVRN prevents the interaction between GRK1 and RHO. Autophosphorylated, Ser-21 is a minor site of autophosphorylation compared to Ser-491 and Thr-492. Phosphorylation at Ser-21 is regulated by light and activated by cAMP. Post-translationally, farnesylation is required for full activity. As to expression, retinal-specific. Expressed in rods and cones cells.

It is found in the membrane. It localises to the cell projection. Its subcellular location is the cilium. The protein localises to the photoreceptor outer segment. It catalyses the reaction L-threonyl-[rhodopsin] + ATP = O-phospho-L-threonyl-[rhodopsin] + ADP + H(+). It carries out the reaction L-seryl-[rhodopsin] + ATP = O-phospho-L-seryl-[rhodopsin] + ADP + H(+). Inhibited by RCVRN, which prevents the interaction between GRK1 and RHO. Inhibition is calcium-dependent. Inhibited by phosphorylation of Ser-21. Functionally, retina-specific kinase involved in the signal turnoff via phosphorylation of rhodopsin (RHO), the G protein- coupled receptor that initiates the phototransduction cascade. This rapid desensitization is essential for scotopic vision and permits rapid adaptation to changes in illumination. May play a role in the maintenance of the outer nuclear layer in the retina. This Homo sapiens (Human) protein is Rhodopsin kinase GRK1.